A 267-amino-acid chain; its full sequence is Indole-3-glycerol phosphate synthase (267 aa).

It belongs to the TrpC family.

The enzyme catalyses 1-(2-carboxyphenylamino)-1-deoxy-D-ribulose 5-phosphate + H(+) = (1S,2R)-1-C-(indol-3-yl)glycerol 3-phosphate + CO2 + H2O. It participates in amino-acid biosynthesis; L-tryptophan biosynthesis; L-tryptophan from chorismate: step 4/5. This is Indole-3-glycerol phosphate synthase from Cupriavidus necator (strain ATCC 17699 / DSM 428 / KCTC 22496 / NCIMB 10442 / H16 / Stanier 337) (Ralstonia eutropha).